The sequence spans 229 residues: Large ribosomal subunit protein uL1 (229 aa).

This sequence belongs to the universal ribosomal protein uL1 family. Part of the 50S ribosomal subunit.

Binds directly to 23S rRNA. The L1 stalk is quite mobile in the ribosome, and is involved in E site tRNA release. In terms of biological role, protein L1 is also a translational repressor protein, it controls the translation of the L11 operon by binding to its mRNA. The chain is Large ribosomal subunit protein uL1 from Actinobacillus succinogenes (strain ATCC 55618 / DSM 22257 / CCUG 43843 / 130Z).